Consider the following 302-residue polypeptide: Recombination-associated protein RdgC (302 aa).

The protein belongs to the RdgC family.

It localises to the cytoplasm. The protein resides in the nucleoid. Functionally, may be involved in recombination. This is Recombination-associated protein RdgC from Haemophilus influenzae (strain PittGG).